Here is a 305-residue protein sequence, read N- to C-terminus: Methionyl-tRNA formyltransferase (305 aa).

110–113 (SLLP) serves as a coordination point for (6S)-5,6,7,8-tetrahydrofolate.

This sequence belongs to the Fmt family.

It catalyses the reaction L-methionyl-tRNA(fMet) + (6R)-10-formyltetrahydrofolate = N-formyl-L-methionyl-tRNA(fMet) + (6S)-5,6,7,8-tetrahydrofolate + H(+). Functionally, attaches a formyl group to the free amino group of methionyl-tRNA(fMet). The formyl group appears to play a dual role in the initiator identity of N-formylmethionyl-tRNA by promoting its recognition by IF2 and preventing the misappropriation of this tRNA by the elongation apparatus. The sequence is that of Methionyl-tRNA formyltransferase from Ureaplasma parvum serovar 3 (strain ATCC 700970).